Here is a 163-residue protein sequence, read N- to C-terminus: Bursicon (163 aa).

The signal sequence occupies residues M1 to A23. Intrachain disulfides connect C39–C88, C53–C102, C63–C123, C67–C125, and C85–C128. The region spanning C39–T129 is the CTCK domain.

Heterodimer of burs and pburs.

It is found in the secreted. Its function is as follows. Final heterodimeric neurohormone released at the end of the molting cycle, involved in the sclerotization (tanning) of the insect cuticle, melanization and wing spreading. In Aedes aegypti (Yellowfever mosquito), this protein is Bursicon.